A 301-amino-acid polypeptide reads, in one-letter code: GTPase Era (301 aa).

An Era-type G domain is found at 4–173 (KAGFVALIGK…LECISKHLSP (170 aa)). A G1 region spans residues 12 to 19 (GKPNAGKS). GTP is bound at residue 12-19 (GKPNAGKS). The segment at 38–42 (NATRK) is G2. Positions 64-67 (DTPG) are G3. Residues 64–68 (DTPGL) and 122–125 (SKID) contribute to the GTP site. A G4 region spans residues 122–125 (SKID). Residues 152–154 (LSA) form a G5 region. The KH type-2 domain maps to 204–280 (LSDEIPYESD…FLNLQVIAQK (77 aa)).

The protein belongs to the TRAFAC class TrmE-Era-EngA-EngB-Septin-like GTPase superfamily. Era GTPase family. Monomer.

It is found in the cytoplasm. Its subcellular location is the cell inner membrane. Functionally, an essential GTPase that binds both GDP and GTP, with rapid nucleotide exchange. Plays a role in 16S rRNA processing and 30S ribosomal subunit biogenesis and possibly also in cell cycle regulation and energy metabolism. This is GTPase Era from Helicobacter pylori (strain Shi470).